Here is a 212-residue protein sequence, read N- to C-terminus: Large ribosomal subunit protein uL3 (212 aa).

The protein belongs to the universal ribosomal protein uL3 family. Part of the 50S ribosomal subunit. Forms a cluster with proteins L14 and L19.

Functionally, one of the primary rRNA binding proteins, it binds directly near the 3'-end of the 23S rRNA, where it nucleates assembly of the 50S subunit. This is Large ribosomal subunit protein uL3 from Ruminiclostridium cellulolyticum (strain ATCC 35319 / DSM 5812 / JCM 6584 / H10) (Clostridium cellulolyticum).